Here is a 402-residue protein sequence, read N- to C-terminus: Putative F-box/kelch-repeat protein At1g61540 (402 aa).

The 47-residue stretch at 24–70 folds into the F-box domain; the sequence is PISIMSLPYDLLLNCFSLVSRLYYPTLSLVSKTFRSIITSRELYEIR. Kelch repeat units lie at residues 135–189, 191–240, and 246–293; these read NIYK…CEVD, KIYI…EVKS, and KIYM…VVDN.

This is Putative F-box/kelch-repeat protein At1g61540 from Arabidopsis thaliana (Mouse-ear cress).